Reading from the N-terminus, the 120-residue chain is Ribonuclease P protein component 2 (120 aa).

It belongs to the eukaryotic/archaeal RNase P protein component 2 family. Consists of a catalytic RNA component and at least 4-5 protein subunits.

It localises to the cytoplasm. It carries out the reaction Endonucleolytic cleavage of RNA, removing 5'-extranucleotides from tRNA precursor.. In terms of biological role, part of ribonuclease P, a protein complex that generates mature tRNA molecules by cleaving their 5'-ends. The chain is Ribonuclease P protein component 2 from Thermococcus kodakarensis (strain ATCC BAA-918 / JCM 12380 / KOD1) (Pyrococcus kodakaraensis (strain KOD1)).